A 246-amino-acid polypeptide reads, in one-letter code: Probable septum site-determining protein MinC (246 aa).

It belongs to the MinC family. As to quaternary structure, interacts with MinD and FtsZ.

Functionally, cell division inhibitor that blocks the formation of polar Z ring septums. Rapidly oscillates between the poles of the cell to destabilize FtsZ filaments that have formed before they mature into polar Z rings. Prevents FtsZ polymerization. The protein is Probable septum site-determining protein MinC of Pseudomonas syringae pv. syringae (strain B728a).